Consider the following 471-residue polypeptide: Galactolipase DONGLE, chloroplastic (471 aa).

Residues Met1–Gln88 constitute a chloroplast transit peptide. The segment at Ser44–Ser71 is disordered. Positions Gly284–Gly288 match the GXSXG motif. Ser286 acts as the Acyl-ester intermediate in catalysis. Catalysis depends on charge relay system residues Asp349 and His400.

This sequence belongs to the AB hydrolase superfamily. Lipase family. Expressed in leaves and seedlings. Not detected in flowers, siliques or roots.

Its subcellular location is the plastid. It localises to the chloroplast. The catalysed reaction is a 1,2-diacyl-3-O-(beta-D-galactosyl)-sn-glycerol + 2 H2O = 3-beta-D-galactosyl-sn-glycerol + 2 a fatty acid + 2 H(+). It catalyses the reaction a 1,2-diacyl-sn-glycero-3-phosphocholine + H2O = a 2-acyl-sn-glycero-3-phosphocholine + a fatty acid + H(+). It carries out the reaction a 1,2-diacyl-3-O-[alpha-D-galactosyl-(1-&gt;6)-beta-D-galactosyl]-sn-glycerol + H2O = acyl-3-O-[alpha-D-galactosyl-(1-&gt;6)-beta-D-galactosyl]-sn-glycerol + a fatty acid + H(+). Functionally, sn-1-specific phospholipase that releases free fatty acids from phosphatidylcholine. Has a higher galactolipase activity than phospholipase A1 activity when digalactosyldiacylglycerol (DGDG) is used as substrate. Catalyzes the initial step of jasmonic acid biosynthesis. Required for the biosynthesis of basal-level endogenous jasmonate in vegetative tissues. Regulates leaves growth. Not essential for jasmonate biosynthesis after wounding or upon pathogen infection. The protein is Galactolipase DONGLE, chloroplastic of Arabidopsis thaliana (Mouse-ear cress).